Reading from the N-terminus, the 183-residue chain is Nucleoside triphosphate pyrophosphatase (183 aa).

The active-site Proton acceptor is the Asp-71.

The protein belongs to the Maf family. Requires a divalent metal cation as cofactor.

Its subcellular location is the cytoplasm. The enzyme catalyses a ribonucleoside 5'-triphosphate + H2O = a ribonucleoside 5'-phosphate + diphosphate + H(+). It carries out the reaction a 2'-deoxyribonucleoside 5'-triphosphate + H2O = a 2'-deoxyribonucleoside 5'-phosphate + diphosphate + H(+). Functionally, nucleoside triphosphate pyrophosphatase. May have a dual role in cell division arrest and in preventing the incorporation of modified nucleotides into cellular nucleic acids. The protein is Nucleoside triphosphate pyrophosphatase of Campylobacter jejuni subsp. jejuni serotype O:2 (strain ATCC 700819 / NCTC 11168).